Here is a 386-residue protein sequence, read N- to C-terminus: uncharacterized protein (386 aa).

Residues 355–386 are disordered; sequence PSEAQKVQVKSNKKPPIAPKPEHLKKRDHGLC. Basic residues predominate over residues 377–386; that stretch reads HLKKRDHGLC.

This is an uncharacterized protein from Rickettsia prowazekii (strain Madrid E).